Consider the following 216-residue polypeptide: Ribosomal RNA small subunit methyltransferase G (216 aa).

S-adenosyl-L-methionine-binding positions include glycine 73, leucine 78, 124–125 (AE), and arginine 139.

The protein belongs to the methyltransferase superfamily. RNA methyltransferase RsmG family.

The protein resides in the cytoplasm. Functionally, specifically methylates the N7 position of guanine in position 518 of 16S rRNA. This Pseudarthrobacter chlorophenolicus (strain ATCC 700700 / DSM 12829 / CIP 107037 / JCM 12360 / KCTC 9906 / NCIMB 13794 / A6) (Arthrobacter chlorophenolicus) protein is Ribosomal RNA small subunit methyltransferase G.